Here is a 275-residue protein sequence, read N- to C-terminus: 4-hydroxy-3-methylbut-2-enyl diphosphate reductase (275 aa).

Cysteine 12 lines the [4Fe-4S] cluster pocket. Residues histidine 40 and histidine 70 each contribute to the (2E)-4-hydroxy-3-methylbut-2-enyl diphosphate site. Dimethylallyl diphosphate-binding residues include histidine 40 and histidine 70. Residues histidine 40 and histidine 70 each coordinate isopentenyl diphosphate. Position 92 (cysteine 92) interacts with [4Fe-4S] cluster. Histidine 119 provides a ligand contact to (2E)-4-hydroxy-3-methylbut-2-enyl diphosphate. A dimethylallyl diphosphate-binding site is contributed by histidine 119. Histidine 119 provides a ligand contact to isopentenyl diphosphate. Glutamate 121 functions as the Proton donor in the catalytic mechanism. Threonine 151 provides a ligand contact to (2E)-4-hydroxy-3-methylbut-2-enyl diphosphate. Cysteine 181 contributes to the [4Fe-4S] cluster binding site. (2E)-4-hydroxy-3-methylbut-2-enyl diphosphate contacts are provided by serine 209, serine 210, asparagine 211, and serine 251. Dimethylallyl diphosphate is bound by residues serine 209, serine 210, asparagine 211, and serine 251. Residues serine 209, serine 210, asparagine 211, and serine 251 each contribute to the isopentenyl diphosphate site.

The protein belongs to the IspH family. [4Fe-4S] cluster is required as a cofactor.

The catalysed reaction is isopentenyl diphosphate + 2 oxidized [2Fe-2S]-[ferredoxin] + H2O = (2E)-4-hydroxy-3-methylbut-2-enyl diphosphate + 2 reduced [2Fe-2S]-[ferredoxin] + 2 H(+). It carries out the reaction dimethylallyl diphosphate + 2 oxidized [2Fe-2S]-[ferredoxin] + H2O = (2E)-4-hydroxy-3-methylbut-2-enyl diphosphate + 2 reduced [2Fe-2S]-[ferredoxin] + 2 H(+). Its pathway is isoprenoid biosynthesis; dimethylallyl diphosphate biosynthesis; dimethylallyl diphosphate from (2E)-4-hydroxy-3-methylbutenyl diphosphate: step 1/1. It participates in isoprenoid biosynthesis; isopentenyl diphosphate biosynthesis via DXP pathway; isopentenyl diphosphate from 1-deoxy-D-xylulose 5-phosphate: step 6/6. Its function is as follows. Catalyzes the conversion of 1-hydroxy-2-methyl-2-(E)-butenyl 4-diphosphate (HMBPP) into a mixture of isopentenyl diphosphate (IPP) and dimethylallyl diphosphate (DMAPP). Acts in the terminal step of the DOXP/MEP pathway for isoprenoid precursor biosynthesis. The polypeptide is 4-hydroxy-3-methylbut-2-enyl diphosphate reductase (Thermotoga sp. (strain RQ2)).